Consider the following 132-residue polypeptide: Agouti-signaling protein (132 aa).

An N-terminal signal peptide occupies residues 1 to 22 (MDVTRLLLATLLVFLCFFTANS). An N-linked (GlcNAc...) asparagine glycan is attached at N39. The interval 62–85 (IGRKAAEKKRSSKKEASMKKVVRP) is disordered. The span at 65–79 (KAAEKKRSSKKEASM) shows a compositional bias: basic and acidic residues. 5 disulfides stabilise this stretch: C93–C108, C100–C114, C107–C125, C111–C132, and C116–C123. Positions 93-132 (CVATRNSCKPPAPACCDPCASCQCRFFRSACSCRVLSLNC) constitute an Agouti domain.

Widely expressed at low levels. Highly expressed in the skin. Expressed in adipose tissue.

Its subcellular location is the secreted. In terms of biological role, involved in the regulation of melanogenesis. The binding of ASP to MC1R precludes alpha-MSH initiated signaling and thus blocks production of cAMP, leading to a down-regulation of eumelanogenesis (brown/black pigment) and thus increasing synthesis of pheomelanin (yellow/red pigment). In higher primates, agouti may affect the quality of hair pigmentation rather than its pattern of deposition. Could well play a role in neuroendocrine aspects of melanocortin action. May have some functional role in regulating the lipid metabolism with adipocytes. This chain is Agouti-signaling protein (ASIP), found in Homo sapiens (Human).